A 2026-amino-acid chain; its full sequence is E3 ubiquitin-protein ligase TRIP12 (2026 aa).

Polar residues-rich tracts occupy residues Met-1–Gly-10, Gly-32–Ser-42, and Ser-73–Pro-84. Positions Met-1–Glu-437 are disordered. Composition is skewed to low complexity over residues Ser-94–Pro-112, Ala-135–Ser-161, Leu-171–Gly-188, and Ala-199–Ala-241. The segment covering Gln-359–Arg-371 has biased composition (polar residues). Over residues Gly-379 to Asp-391 the composition is skewed to basic and acidic residues. Residues Ser-392–Ala-404 are compositionally biased toward polar residues. The segment covering Gly-412–Glu-430 has biased composition (low complexity). Residues Met-789–Lys-876 enclose the WWE domain. Disordered stretches follow at residues Ser-1008–Asn-1123 and Gly-1441–Glu-1470. A compositionally biased stretch (basic residues) spans Lys-1040 to Lys-1053. The span at Pro-1056–Asn-1065 shows a compositional bias: basic and acidic residues. Residues Lys-1068–Ser-1079 show a composition bias toward low complexity. Polar residues predominate over residues Thr-1094 to Ser-1104. The segment at Glu-1530 to Pro-1604 is K-box. In terms of domain architecture, HECT spans Pro-1919–Ser-2026. The active-site Glycyl thioester intermediate is Cys-1993.

The protein belongs to the UPL family. K-HECT subfamily.

It localises to the nucleus. Its subcellular location is the nucleoplasm. The catalysed reaction is S-ubiquitinyl-[E2 ubiquitin-conjugating enzyme]-L-cysteine + [acceptor protein]-L-lysine = [E2 ubiquitin-conjugating enzyme]-L-cysteine + N(6)-ubiquitinyl-[acceptor protein]-L-lysine.. The protein operates within protein modification; protein ubiquitination. E3 ubiquitin-protein ligase involved in ubiquitin fusion degradation (UFD) pathway and regulation of DNA repair. Part of the ubiquitin fusion degradation (UFD) pathway, a process that mediates ubiquitination of protein at their N-terminus, regardless of the presence of lysine residues in target proteins. Acts as a key regulator of DNA damage response by acting as a suppressor of RNF168, an E3 ubiquitin-protein ligase that promotes accumulation of 'Lys-63'-linked histone H2A and H2AX at DNA damage sites, thereby acting as a guard against excessive spreading of ubiquitinated chromatin at damaged chromosomes. This chain is E3 ubiquitin-protein ligase TRIP12 (trip12), found in Danio rerio (Zebrafish).